The following is a 78-amino-acid chain: Large ribosomal subunit protein bL28 (78 aa).

The tract at residues 1 to 20 (MSRVCQVTSKRPAVGNNRSH) is disordered.

Belongs to the bacterial ribosomal protein bL28 family.

The protein is Large ribosomal subunit protein bL28 of Haemophilus ducreyi (strain 35000HP / ATCC 700724).